A 962-amino-acid chain; its full sequence is Protease 3 (962 aa).

An N-terminal signal peptide occupies residues 1–23 (MPRSTWFKALLLLVALWGPAVQA). A Zn(2+)-binding site is contributed by His-88. The active-site Proton acceptor is Glu-91. The Zn(2+) site is built by His-92 and Glu-169.

Belongs to the peptidase M16 family. In terms of assembly, monomer. It depends on Zn(2+) as a cofactor.

The protein localises to the periplasm. The catalysed reaction is Preferential cleavage of 16-Tyr-|-Leu-17 and 25-Phe-|-Tyr-26 bonds of oxidized insulin B chain. Also acts on other substrates of Mw less than 7 kDa such as insulin and glucagon.. Functionally, endopeptidase that degrades small peptides of less than 7 kDa, such as glucagon and insulin. This chain is Protease 3 (ptrA), found in Salmonella typhimurium (strain LT2 / SGSC1412 / ATCC 700720).